Reading from the N-terminus, the 248-residue chain is 2,3-bisphosphoglycerate-dependent phosphoglycerate mutase (248 aa).

Substrate contacts are provided by residues 8–15 (RHGESEWN), 21–22 (TG), arginine 60, 87–90 (ERHY), lysine 98, 114–115 (RR), and 183–184 (GN). Histidine 9 functions as the Tele-phosphohistidine intermediate in the catalytic mechanism. Catalysis depends on glutamate 87, which acts as the Proton donor/acceptor.

This sequence belongs to the phosphoglycerate mutase family. BPG-dependent PGAM subfamily.

It catalyses the reaction (2R)-2-phosphoglycerate = (2R)-3-phosphoglycerate. It participates in carbohydrate degradation; glycolysis; pyruvate from D-glyceraldehyde 3-phosphate: step 3/5. Functionally, catalyzes the interconversion of 2-phosphoglycerate and 3-phosphoglycerate. This Coprothermobacter proteolyticus (strain ATCC 35245 / DSM 5265 / OCM 4 / BT) protein is 2,3-bisphosphoglycerate-dependent phosphoglycerate mutase.